Reading from the N-terminus, the 392-residue chain is Formate-dependent phosphoribosylglycinamide formyltransferase (392 aa).

Residues glutamate 22 to leucine 23 and glutamate 82 contribute to the N(1)-(5-phospho-beta-D-ribosyl)glycinamide site. Residues arginine 114, lysine 155, serine 160–glutamine 165, glutamate 195–valine 198, and glutamate 203 contribute to the ATP site. The 190-residue stretch at arginine 119 to leucine 308 folds into the ATP-grasp domain. Mg(2+) contacts are provided by glutamate 267 and glutamate 279. Residues aspartate 286, lysine 355, and arginine 362–arginine 363 each bind N(1)-(5-phospho-beta-D-ribosyl)glycinamide.

The protein belongs to the PurK/PurT family. As to quaternary structure, homodimer.

The enzyme catalyses N(1)-(5-phospho-beta-D-ribosyl)glycinamide + formate + ATP = N(2)-formyl-N(1)-(5-phospho-beta-D-ribosyl)glycinamide + ADP + phosphate + H(+). It functions in the pathway purine metabolism; IMP biosynthesis via de novo pathway; N(2)-formyl-N(1)-(5-phospho-D-ribosyl)glycinamide from N(1)-(5-phospho-D-ribosyl)glycinamide (formate route): step 1/1. In terms of biological role, involved in the de novo purine biosynthesis. Catalyzes the transfer of formate to 5-phospho-ribosyl-glycinamide (GAR), producing 5-phospho-ribosyl-N-formylglycinamide (FGAR). Formate is provided by PurU via hydrolysis of 10-formyl-tetrahydrofolate. The sequence is that of Formate-dependent phosphoribosylglycinamide formyltransferase from Salmonella paratyphi A (strain ATCC 9150 / SARB42).